The following is a 229-amino-acid chain: Probable ribonuclease H (229 aa).

Positions 42-164 (LQDISLEFDK…ADFLANSAAK (123 aa)) constitute an RNase H type-1 domain. The a divalent metal cation site is built by E60, D87, and D156.

This sequence belongs to the RNase H family. A divalent metal cation serves as cofactor.

It carries out the reaction Endonucleolytic cleavage to 5'-phosphomonoester.. Its function is as follows. Endonuclease that specifically degrades the RNA of RNA-DNA hybrids. This chain is Probable ribonuclease H (RNH1), found in Acanthamoeba polyphaga mimivirus (APMV).